The following is a 538-amino-acid chain: Lipid scramblase CLPTM1L (538 aa).

Residues 1–10 lie on the Cytoplasmic side of the membrane; sequence MWSGRSSFTS. A helical membrane pass occupies residues 11 to 31; that stretch reads LVVGVFVVYVVHTCWVMYGIV. Over 32 to 284 the chain is Extracellular; the sequence is YTRPCSGDAN…VKGIFVDTNL (253 aa). N-linked (GlcNAc...) asparagine glycans are attached at residues N91 and N101. The helical transmembrane segment at 285–305 threads the bilayer; it reads YFLALTFFVAAFHLLFDFLAF. At 306–324 the chain is on the cytoplasmic side; it reads KNDISFWKKKKSMIGMSTK. The helical transmembrane segment at 325–342 threads the bilayer; that stretch reads AVLWRCFSTVVIFLFLLD. The Extracellular portion of the chain corresponds to 343-346; sequence EQTS. A helical membrane pass occupies residues 347 to 364; sequence LLVLVPAGVGAAIELWKV. Over 365-402 the chain is Cytoplasmic; the sequence is KKALKMTILWRGLMPEFELGTYSESERKTEEYDTQAMK. The chain crosses the membrane as a helical span at residues 403–423; that stretch reads YLSYLLYPLCVGGAVYSLLNI. Residues 424–428 lie on the Extracellular side of the membrane; sequence KYKSW. Residues 429–449 traverse the membrane as a helical segment; it reads YSWLINSFVNGVYAFGFLFML. Residues 450 to 538 are Cytoplasmic-facing; sequence PQLFVNYKLK…EKAARAPHTD (89 aa).

This sequence belongs to the CLPTM1 family.

It localises to the endoplasmic reticulum membrane. It catalyses the reaction a 6-(alpha-D-glucosaminyl)-1-(1,2-diacyl-sn-glycero-3-phospho)-1D-myo-inositol(in) = a 6-(alpha-D-glucosaminyl)-1-(1,2-diacyl-sn-glycero-3-phospho)-1D-myo-inositol(out). The catalysed reaction is 6-(alpha-D-glucosaminyl)-(1-octadecanoyl,2-(9Z)-octadecenoyl-sn-glycero-3-phospho)-1D-myo-inositol(in) = 6-(alpha-D-glucosaminyl)-(1-octadecanoyl,2-(9Z)-octadecenoyl-sn-glycero-3-phospho)-1D-myo-inositol(out). The enzyme catalyses a 1,2-diacyl-sn-glycero-3-phospho-(1D-myo-inositol)(in) = a 1,2-diacyl-sn-glycero-3-phospho-(1D-myo-inositol)(out). It carries out the reaction a 1,2-diacyl-sn-glycero-3-phosphocholine(in) = a 1,2-diacyl-sn-glycero-3-phosphocholine(out). It catalyses the reaction a 1,2-diacyl-sn-glycero-3-phosphoethanolamine(in) = a 1,2-diacyl-sn-glycero-3-phosphoethanolamine(out). In terms of biological role, scramblase that mediates the translocation of glucosaminylphosphatidylinositol (alpha-D-GlcN-(1-6)-(1,2-diacyl-sn-glycero-3-phospho)-1D-myo-inositol, GlcN-PI) across the endoplasmic reticulum (ER) membrane, from the cytosolic leaflet to the luminal leaflet of the ER membrane, where it participates in the biosynthesis of glycosylphosphatidylinositol (GPI). GPI is a lipid glycoconjugate involved in post-translational modification of proteins. Can also translocate 1,2-diacyl-sn-glycero-3-phospho-(1D-myo-inositol) (phosphatidylinositol or PI), as well as several other phospholipids (1,2-diacyl-sn-glycero-3-phosphocholine, 1,2-diacyl-sn-glycero-3-phosphoethanolamine), and N-acetylglucosaminylphosphatidylinositol (GlcNAc-PI) in vitro. The polypeptide is Lipid scramblase CLPTM1L (CLPTM1L) (Pongo abelii (Sumatran orangutan)).